The chain runs to 101 residues: MIGKEVTLQDIVLELNELQPEVQPVDLFCEEELPSEQQETEEELPERTAYKVVTPCGCCKVKLRIFVNATQFAIRTFQNLLFEELQLLCPECRGNCKHGGS.

An E7 terminal domain region spans residues 1-44 (MIGKEVTLQDIVLELNELQPEVQPVDLFCEEELPSEQQETEEEL). An LXCXE motif; interaction with host RB1 and TMEM173/STING motif is present at residues 27 to 31 (LFCEE). Residues 56–92 (CGCCKVKLRIFVNATQFAIRTFQNLLFEELQLLCPEC) fold into a zinc finger. The Nuclear export signal signature appears at 74 to 82 (IRTFQNLLF).

The protein belongs to the papillomaviridae E7 protein family. As to quaternary structure, homodimer. Homooligomer. Interacts with host RB1; this interaction induces dissociation of RB1-E2F1 complex thereby disrupting RB1 activity. Interacts with host EP300; this interaction represses EP300 transcriptional activity. Interacts with protein E2; this interaction inhibits E7 oncogenic activity. Interacts with host TMEM173/STING; this interaction impairs the ability of TMEM173/STING to sense cytosolic DNA and promote the production of type I interferon (IFN-alpha and IFN-beta). Highly phosphorylated.

The protein localises to the host cytoplasm. Its subcellular location is the host nucleus. Its function is as follows. Plays a role in viral genome replication by driving entry of quiescent cells into the cell cycle. Stimulation of progression from G1 to S phase allows the virus to efficiently use the cellular DNA replicating machinery to achieve viral genome replication. E7 protein has both transforming and trans-activating activities. Induces the disassembly of the E2F1 transcription factor from RB1, with subsequent transcriptional activation of E2F1-regulated S-phase genes. Interferes with host histone deacetylation mediated by HDAC1 and HDAC2, leading to transcription activation. Also plays a role in the inhibition of both antiviral and antiproliferative functions of host interferon alpha. Interaction with host TMEM173/STING impairs the ability of TMEM173/STING to sense cytosolic DNA and promote the production of type I interferon (IFN-alpha and IFN-beta). This Homo sapiens (Human) protein is Protein E7.